A 119-amino-acid chain; its full sequence is DNA-binding protein MMP0157 (119 aa).

Residues 1–12 are compositionally biased toward basic and acidic residues; the sequence is MNPEEIRQRRLQ. The disordered stretch occupies residues 1–35; that stretch reads MNPEEIRQRRLQEMQAKAQAQGAANDPEAQRQMQE.

This sequence belongs to the PDCD5 family.

The sequence is that of DNA-binding protein MMP0157 from Methanococcus maripaludis (strain DSM 14266 / JCM 13030 / NBRC 101832 / S2 / LL).